Here is a 284-residue protein sequence, read N- to C-terminus: MLIIETVPLLRQQIRRLRMEGKRIALVPTMGNLHDGHMKLVDEAKASADAVVVSIFVNPMQFDRADDLARYPRTLQEDCEKLKKRGADFVFAPTPEEVYPQGMSDQTYVDVPGLSTMLEGASRPGHFRGVSTVVSKLFNLVQPDVACFGEKDYQQLALIRKMTADMGYDIEIIGVPTVRAKDGLALSSRNGYLTSDQRKIAPGLSKVMNTMAEKLRAGERDLEAIIAAASEALSEKGFRPDDLQIRDADTLQALSPASQRAVILMAAWLGQARLIDNQTVELTQ.

Residue 30–37 coordinates ATP; the sequence is MGNLHDGH. Catalysis depends on histidine 37, which acts as the Proton donor. Residue glutamine 61 participates in (R)-pantoate binding. Glutamine 61 is a binding site for beta-alanine. 149–152 contacts ATP; it reads GEKD. Residue glutamine 155 participates in (R)-pantoate binding. ATP-binding positions include valine 178 and 186-189; that span reads LSSR.

This sequence belongs to the pantothenate synthetase family. As to quaternary structure, homodimer.

The protein resides in the cytoplasm. It catalyses the reaction (R)-pantoate + beta-alanine + ATP = (R)-pantothenate + AMP + diphosphate + H(+). It functions in the pathway cofactor biosynthesis; (R)-pantothenate biosynthesis; (R)-pantothenate from (R)-pantoate and beta-alanine: step 1/1. Its function is as follows. Catalyzes the condensation of pantoate with beta-alanine in an ATP-dependent reaction via a pantoyl-adenylate intermediate. The protein is Pantothenate synthetase of Cronobacter sakazakii (strain ATCC BAA-894) (Enterobacter sakazakii).